The sequence spans 799 residues: ATP-dependent RNA helicase DBP7 (799 aa).

2 disordered regions span residues 34–177 (KALR…RRIR) and 201–229 (DRIA…NAAL). Composition is skewed to basic and acidic residues over residues 35–49 (ALRE…KKEQ), 56–66 (IEDRMKRREQD), 73–100 (KPYD…KSYD), 114–132 (EKYQ…ERWV), and 139–172 (NRRD…DGSL). The segment covering 208 to 220 (VQMEDEEEEEAEN) has biased composition (acidic residues). A Q motif motif is present at residues 233-261 (TTFSGLGCSQRLVDALVGMQLAKPTKIQR). Positions 265–465 (PRLIQRERDL…KSTLKDADWV (201 aa)) constitute a Helicase ATP-binding domain. Residues 278–285 (AQTGSGKT) and 306–313 (TGLFAVIL) contribute to the ATP site. A DEAD box motif is present at residues 391-394 (DEGD). A Helicase C-terminal domain is found at 511–679 (DILQSSEKTN…NILAAGFGGK (169 aa)). The segment at 750–799 (KLGKKKDPEKIKVNKDGSLDETQARKKMLDRSRKHVYNSGESAMGGYVLE) is disordered. Positions 754-780 (KKDPEKIKVNKDGSLDETQARKKMLDR) are enriched in basic and acidic residues.

This sequence belongs to the DEAD box helicase family. DDX31/DBP7 subfamily.

Its subcellular location is the nucleus. It is found in the nucleolus. The enzyme catalyses ATP + H2O = ADP + phosphate + H(+). In terms of biological role, ATP-binding RNA helicase involved in the biogenesis of 60S ribosomal subunits and is required for the normal formation of 25S and 5.8S rRNAs. This is ATP-dependent RNA helicase DBP7 (DBP7) from Yarrowia lipolytica (strain CLIB 122 / E 150) (Yeast).